A 493-amino-acid chain; its full sequence is Probable cytosol aminopeptidase (493 aa).

Mn(2+)-binding residues include K260 and D265. The active site involves K272. D283, D342, and E344 together coordinate Mn(2+). R346 is a catalytic residue.

It belongs to the peptidase M17 family. It depends on Mn(2+) as a cofactor.

It is found in the cytoplasm. It catalyses the reaction Release of an N-terminal amino acid, Xaa-|-Yaa-, in which Xaa is preferably Leu, but may be other amino acids including Pro although not Arg or Lys, and Yaa may be Pro. Amino acid amides and methyl esters are also readily hydrolyzed, but rates on arylamides are exceedingly low.. The catalysed reaction is Release of an N-terminal amino acid, preferentially leucine, but not glutamic or aspartic acids.. In terms of biological role, presumably involved in the processing and regular turnover of intracellular proteins. Catalyzes the removal of unsubstituted N-terminal amino acids from various peptides. The protein is Probable cytosol aminopeptidase of Clostridium perfringens (strain 13 / Type A).